The following is a 420-amino-acid chain: Carbohydrate sulfotransferase 1 (420 aa).

A topological domain (cytoplasmic) is located at residue Met-1. A helical; Signal-anchor for type II membrane protein transmembrane segment spans residues 2 to 23 (QCSWKAVILLALVSIAIQYTAI). The Lumenal segment spans residues 24-420 (RTFTAKPFHI…IEDKTFIPFL (397 aa)). The N-linked (GlcNAc...) asparagine glycan is linked to Asn-64. Position 77–83 (77–83 (TRSGSSF)) interacts with 3'-phosphoadenylyl sulfate. Residues Asn-153 and Asn-197 are each glycosylated (N-linked (GlcNAc...) asparagine). 3'-phosphoadenylyl sulfate is bound at residue 242–250 (RDPRGILSS). N-linked (GlcNAc...) asparagine glycosylation is found at Asn-342 and Asn-405.

Belongs to the sulfotransferase 1 family. Gal/GlcNAc/GalNAc subfamily.

It localises to the golgi apparatus membrane. The enzyme catalyses 3'-phosphoadenylyl sulfate + keratan = adenosine 3',5'-bisphosphate + keratan 6'-sulfate.. In terms of biological role, sulfotransferase that utilizes 3'-phospho-5'-adenylyl sulfate (PAPS) as sulfonate donor to catalyze the transfer of sulfate to position 6 of galactose (Gal) residues of keratan. The sequence is that of Carbohydrate sulfotransferase 1 (chst1) from Danio rerio (Zebrafish).